We begin with the raw amino-acid sequence, 64 residues long: Small, acid-soluble spore protein beta (64 aa).

Belongs to the alpha/beta-type SASP family.

Its function is as follows. SASP are bound to spore DNA. They are double-stranded DNA-binding proteins that cause DNA to change to an a-like conformation. They protect the DNA backbone from chemical and enzymatic cleavage and are thus involved in dormant spore's high resistance to UV light. This chain is Small, acid-soluble spore protein beta, found in Paraclostridium bifermentans (Clostridium bifermentans).